The primary structure comprises 509 residues: Histidine--tRNA ligase, cytoplasmic (509 aa).

N-acetylalanine is present on A2. One can recognise a WHEP-TRS domain in the interval 3–59 (ERAALEELVKLQGERVRGLKQQKASAELIEEEVAKLLKLKAQLGPDESKQKFVLKTP). At S66 the chain carries Phosphoserine. L-histidine-binding positions include 130 to 132 (DLT), R157, Q173, D177, R326, and 330 to 331 (YY). A Phosphoserine modification is found at S356.

Belongs to the class-II aminoacyl-tRNA synthetase family. In terms of assembly, homodimer.

The protein localises to the cytoplasm. It carries out the reaction tRNA(His) + L-histidine + ATP = L-histidyl-tRNA(His) + AMP + diphosphate + H(+). Its function is as follows. Catalyzes the ATP-dependent ligation of histidine to the 3'-end of its cognate tRNA, via the formation of an aminoacyl-adenylate intermediate (His-AMP). Plays a role in axon guidance. This Pongo abelii (Sumatran orangutan) protein is Histidine--tRNA ligase, cytoplasmic (HARS1).